A 23-amino-acid polypeptide reads, in one-letter code: Paralytic peptide 1 (23 aa).

A disulfide bridge links C7 with C19.

This sequence belongs to the GBP/PSP1/paralytic peptide family. As to expression, hemolymph.

Causes rapid, rigid paralysis when injected into Lepidopteran larvae. The physiological role may be to reduce hemolymph loss following injury and promote wound healing. This chain is Paralytic peptide 1, found in Spodoptera exigua (Beet armyworm).